Reading from the N-terminus, the 365-residue chain is uncharacterized protein (365 aa).

Disordered stretches follow at residues 218-262 and 315-342; these read QRPS…AEAA and PRLPEPPVPPDGSGSRMEFRNLSDRTPC. Basic and acidic residues-rich tracts occupy residues 239–257 and 331–341; these read PDNRVQEHREELSQTKDPE and MEFRNLSDRTP.

This is an uncharacterized protein from Mus musculus (Mouse).